The sequence spans 37 residues: Glucagon-1 (37 aa).

The protein belongs to the glucagon family.

It localises to the secreted. Functionally, glucagon plays a key role in glucose metabolism and homeostasis. Regulates blood glucose by increasing gluconeogenesis and decreasing glycolysis. The polypeptide is Glucagon-1 (Huso dauricus (Kaluga sturgeon)).